The primary structure comprises 198 residues: Protein XA-1 (198 aa).

The first 18 residues, 1-18 (MFFYVLLLALMAQGWSLP), serve as a signal peptide directing secretion. Positions 17–198 (LPQGKTGEDS…KHGQEQGKKH (182 aa)) are disordered. Residues 29-44 (FRPPSPPMGPSLPPPV) show a composition bias toward pro residues. Residues 46–59 (HDLHRPSGHPEEFR) show a composition bias toward basic and acidic residues. A compositionally biased stretch (basic residues) spans 76-86 (GRPKRDLHHGK). Residues 95 to 104 (HTGEVLHHTD) show a composition bias toward basic and acidic residues. Basic residues predominate over residues 134-145 (HGRHRRDLHHGK). Residues 181-198 (NSSEEKRPKHGQEQGKKH) are compositionally biased toward basic and acidic residues.

As to expression, expressed in the periphery of the cement gland as well as in the region of the hatching gland.

Its subcellular location is the secreted. This Xenopus laevis (African clawed frog) protein is Protein XA-1.